The primary structure comprises 84 residues: U2-theraphotoxin-Cg1b 1 (84 aa).

Residues 1–21 (MKVSVLITLAVWGVMFLLTSA) form the signal peptide. The propeptide occupies 22–48 (QERGSDQMDSPAWLKSMERIFQSEERE). Intrachain disulfides connect C49/C63, C56/C68, and C62/C76.

The protein belongs to the neurotoxin 10 (Hwtx-1) family. 06 (F4b) subfamily. As to expression, expressed by the venom gland.

The protein localises to the secreted. In terms of biological role, probable ion channel inhibitor. The sequence is that of U2-theraphotoxin-Cg1b 1 from Chilobrachys guangxiensis (Chinese earth tiger tarantula).